The sequence spans 946 residues: Bifunctional glutamine synthetase adenylyltransferase/adenylyl-removing enzyme (946 aa).

The interval 1–440 is adenylyl removase; sequence MKPLSSPLQQ…VFNELIGDDE (440 aa). Residues 449–946 are adenylyl transferase; that stretch reads SEQWRELWQD…ASWQKWLVEE (498 aa).

Belongs to the GlnE family. The cofactor is Mg(2+).

The catalysed reaction is [glutamine synthetase]-O(4)-(5'-adenylyl)-L-tyrosine + phosphate = [glutamine synthetase]-L-tyrosine + ADP. It catalyses the reaction [glutamine synthetase]-L-tyrosine + ATP = [glutamine synthetase]-O(4)-(5'-adenylyl)-L-tyrosine + diphosphate. Functionally, involved in the regulation of glutamine synthetase GlnA, a key enzyme in the process to assimilate ammonia. When cellular nitrogen levels are high, the C-terminal adenylyl transferase (AT) inactivates GlnA by covalent transfer of an adenylyl group from ATP to specific tyrosine residue of GlnA, thus reducing its activity. Conversely, when nitrogen levels are low, the N-terminal adenylyl removase (AR) activates GlnA by removing the adenylyl group by phosphorolysis, increasing its activity. The regulatory region of GlnE binds the signal transduction protein PII (GlnB) which indicates the nitrogen status of the cell. This is Bifunctional glutamine synthetase adenylyltransferase/adenylyl-removing enzyme from Shigella sonnei (strain Ss046).